The primary structure comprises 82 residues: Putative defensin-like protein 48 (82 aa).

The N-terminal stretch at 1-28 (MGIKTLIIFFHIFILAVLSSNNIILTSG) is a signal peptide. 4 cysteine pairs are disulfide-bonded: Cys-39–Cys-80, Cys-43–Cys-67, Cys-53–Cys-78, and Cys-57–Cys-79.

This sequence belongs to the DEFL family.

It localises to the secreted. The chain is Putative defensin-like protein 48 from Arabidopsis thaliana (Mouse-ear cress).